A 387-amino-acid chain; its full sequence is Cytochrome b (387 aa).

4 consecutive transmembrane segments (helical) span residues 32–52 (FGSLLACVLVVQIVTGILLAC), 76–98 (FLLRALHANGASFFFIFLYLHIG), 113–133 (TWNIGVIIFLLTIITAFLGYC), and 179–199 (FFSLHYLMPFVIAALSIMHLI). Residues His-82 and His-96 each coordinate heme b. The heme b site is built by His-183 and His-197. His-202 lines the a ubiquinone pocket. The next 4 membrane-spanning stretches (helical) occupy residues 225-245 (FLIKDLITIFIFLLAINYMVF), 289-309 (QLGVVAMLLSILVLLLLPLLD), 321-341 (MGKFFFWCFVADFCILAWIGG), and 348-368 (FITIGAYATAFYFIYFFILIP).

It belongs to the cytochrome b family. In terms of assembly, fungal cytochrome b-c1 complex contains 10 subunits; 3 respiratory subunits, 2 core proteins and 5 low-molecular weight proteins. Cytochrome b-c1 complex is a homodimer. The cofactor is heme b.

It localises to the mitochondrion inner membrane. In terms of biological role, component of the ubiquinol-cytochrome c reductase complex (complex III or cytochrome b-c1 complex) that is part of the mitochondrial respiratory chain. The b-c1 complex mediates electron transfer from ubiquinol to cytochrome c. Contributes to the generation of a proton gradient across the mitochondrial membrane that is then used for ATP synthesis. In Schizosaccharomyces octosporus (Fission yeast), this protein is Cytochrome b (cob).